The primary structure comprises 452 residues: COBRA-like protein 1 (452 aa).

The signal sequence occupies residues 1–33; sequence MGFFLCSSSSIFFKFGISIIFLVSFSGLTPSEA. 9 N-linked (GlcNAc...) asparagine glycosylation sites follow: asparagine 42, asparagine 167, asparagine 175, asparagine 214, asparagine 239, asparagine 254, asparagine 323, asparagine 338, and asparagine 357. The GPI-anchor amidated serine moiety is linked to residue serine 432. The propeptide at 433-452 is removed in mature form; the sequence is VGSLFAAMALLLIVFLHGNL.

The protein belongs to the COBRA family. In terms of tissue distribution, expressed in roots, stems, leaves, flowers and siliques.

Its subcellular location is the cell membrane. The protein is COBRA-like protein 1 (COBL1) of Arabidopsis thaliana (Mouse-ear cress).